Here is a 480-residue protein sequence, read N- to C-terminus: Selenium-binding protein 3 (480 aa).

Positions 12 and 13 each coordinate selenite.

Belongs to the selenium-binding protein family. As to expression, expressed in young seedlings, mostly in roots.

This Arabidopsis thaliana (Mouse-ear cress) protein is Selenium-binding protein 3 (SBP3).